The chain runs to 359 residues: DNA polymerase IV (359 aa).

In terms of domain architecture, UmuC spans 4-184 (IVHVDMDAFY…LKVNRIPGVG (181 aa)). Residues Asp8 and Asp102 each coordinate Mg(2+). Glu103 is a catalytic residue.

The protein belongs to the DNA polymerase type-Y family. In terms of assembly, monomer. Requires Mg(2+) as cofactor.

It is found in the cytoplasm. It carries out the reaction DNA(n) + a 2'-deoxyribonucleoside 5'-triphosphate = DNA(n+1) + diphosphate. Its function is as follows. Poorly processive, error-prone DNA polymerase involved in untargeted mutagenesis. Copies undamaged DNA at stalled replication forks, which arise in vivo from mismatched or misaligned primer ends. These misaligned primers can be extended by PolIV. Exhibits no 3'-5' exonuclease (proofreading) activity. May be involved in translesional synthesis, in conjunction with the beta clamp from PolIII. The chain is DNA polymerase IV from Xanthomonas oryzae pv. oryzae (strain MAFF 311018).